The primary structure comprises 382 residues: Protein-arginine rhamnosyltransferase (382 aa).

DTDP-beta-L-rhamnose-binding positions include 17 to 20, Y187, Q252, and 268 to 272; these read NFGD and RGEDS. D20 (proton acceptor) is an active-site residue. The active site involves E270.

The protein belongs to the glycosyltransferase 104 family.

It carries out the reaction dTDP-beta-L-rhamnose + L-arginyl-[protein] = N(omega)-(alpha-L-rhamnosyl)-L-arginyl-[protein] + dTDP + H(+). In terms of biological role, protein-arginine rhamnosyltransferase that catalyzes the transfer of a single rhamnose to elongation factor P (EF-P) on 'Lys-32', a modification required for EF-P-dependent rescue of polyproline stalled ribosomes. The chain is Protein-arginine rhamnosyltransferase from Neisseria meningitidis.